The chain runs to 725 residues: NAD(+) hydrolase SARM1 (725 aa).

Residues 1 to 27 (MVLTILFSAYKLCRFFAMSSPRPGAER) constitute a mitochondrion transit peptide. The stretch at 60–100 (EVQGALERALPELQQALSALKQAGGGRAVGAGLAEVFQLVE) is one ARM 1 repeat. NAD(+)-binding positions include Trp103, Arg110, 149-158 (EQILVAENRR), and 191-194 (HMFK). 7 ARM repeats span residues 114–153 (QGLCDAIRLEGGLDLLLRLLQAPELETRVQAARLLEQILV), 155–194 (ENRRDRVARIGLGVILNLAKEREPVELARSVAGILEHMFK), 197–236 (EETCQRLVAAGGLDAVLYWCRRTDPALLRHCALALANCAM), 238–281 (GGQA…LATN), 282–315 (KEVEREVERSGTLALVEPLVASLDPGRFARCLVD), 316–355 (ASDTSQGRGPDDLQRLVPLLDSSRMEAQCIGAFYLCAEAV), and 360–403 (KNRN…EEVP). SAM domains lie at 413–477 (WKEA…LKTF) and 483–549 (CDRS…MLHS). A phosphoserine mark is found at Ser549 and Ser559. Residues 561–704 (DVPDVFISYR…KIIRFLQGRS (144 aa)) enclose the TIR domain. NAD(+) is bound by residues 570–571 (RR) and Glu600. Residue Glu643 is part of the active site. The tract at residues 705–725 (SRDSSAGSDTSLEGAAPMGPT) is disordered.

Belongs to the SARM1 family. As to quaternary structure, homooctamer; forms an octameric ring via SAM domains. Interacts with TICAM1/TRIF and thereby interferes with TICAM1/TRIF function. Interacts with MAPK10/JNK3 and SDC2 (via cytoplasmic domain). Post-translationally, phosphorylation at Ser-549 by JNK kinases (MAPK8, MAPK9 and /or MAPK10) enhance the NAD(+) hydrolase (NADase) activity. Phosphorylation at Ser-549 and subsequent activation takes place in response to oxidative stress conditions and inhibits mitochondrial respiration. As to expression, highest expression seen in the spleen and the brain, followed by lung, kidney, liver and other tissues.

It is found in the cytoplasm. The protein localises to the cell projection. Its subcellular location is the axon. The protein resides in the dendrite. It localises to the synapse. It is found in the mitochondrion. The catalysed reaction is NAD(+) + H2O = ADP-D-ribose + nicotinamide + H(+). The enzyme catalyses NAD(+) = cyclic ADP-beta-D-ribose + nicotinamide + H(+). It catalyses the reaction NADP(+) + H2O = ADP-D-ribose 2'-phosphate + nicotinamide + H(+). With respect to regulation, autoinhibited: in the inactive state, the enzymatic TIR domain is held apart by the autoinhibiting ARM repeats. NAD(+)-binding to ARM repeats maintains an inactive state by promoting interaction between ARM repeats and the TIR domain, thereby facilitating inhibition of the enzymatic TIR domain. Following activation, possibly by nicotinamide mononucleotide (NMN), auto-inhibitory interactions are released, allowing self-association of the TIR domains and subsequent activation of the NAD(+) hydrolase (NADase) activity. Self-association of TIR domains is facilitated by the octamer of SAM domains. Its function is as follows. NAD(+) hydrolase, which plays a key role in axonal degeneration following injury by regulating NAD(+) metabolism. Acts as a negative regulator of MYD88- and TRIF-dependent toll-like receptor signaling pathway by promoting Wallerian degeneration, an injury-induced form of programmed subcellular death which involves degeneration of an axon distal to the injury site. Wallerian degeneration is triggered by NAD(+) depletion: in response to injury, SARM1 is activated and catalyzes cleavage of NAD(+) into ADP-D-ribose (ADPR), cyclic ADPR (cADPR) and nicotinamide; NAD(+) cleavage promoting cytoskeletal degradation and axon destruction. Also able to hydrolyze NADP(+), but not other NAD(+)-related molecules. Can activate neuronal cell death in response to stress. Regulates dendritic arborization through the MAPK4-JNK pathway. Involved in innate immune response: inhibits both TICAM1/TRIF- and MYD88-dependent activation of JUN/AP-1, TRIF-dependent activation of NF-kappa-B and IRF3, and the phosphorylation of MAPK14/p38. This is NAD(+) hydrolase SARM1 from Sus scrofa (Pig).